A 40-amino-acid polypeptide reads, in one-letter code: Photosystem II reaction center protein J (40 aa).

Residues 8–28 (IPLWIIGTVAGILVIGLIGIF) traverse the membrane as a helical segment.

Belongs to the PsbJ family. In terms of assembly, PSII is composed of 1 copy each of membrane proteins PsbA, PsbB, PsbC, PsbD, PsbE, PsbF, PsbH, PsbI, PsbJ, PsbK, PsbL, PsbM, PsbT, PsbX, PsbY, PsbZ, Psb30/Ycf12, at least 3 peripheral proteins of the oxygen-evolving complex and a large number of cofactors. It forms dimeric complexes.

The protein resides in the plastid. The protein localises to the chloroplast thylakoid membrane. One of the components of the core complex of photosystem II (PSII). PSII is a light-driven water:plastoquinone oxidoreductase that uses light energy to abstract electrons from H(2)O, generating O(2) and a proton gradient subsequently used for ATP formation. It consists of a core antenna complex that captures photons, and an electron transfer chain that converts photonic excitation into a charge separation. The polypeptide is Photosystem II reaction center protein J (Oenothera elata subsp. hookeri (Hooker's evening primrose)).